The primary structure comprises 496 residues: Fibronectin type III and SPRY domain-containing protein 1 (496 aa).

The stretch at 4–99 (QREALRKIIT…ALESSEELLE (96 aa)) forms a coiled coil. Residues 105-162 (LQAMDREDFPQAAKQIKDGVTMAPAFRLSLKAKVSDNMSHLMVDFAQERQMLQALKFL) enclose the COS domain. The region spanning 164 to 268 (VPSAPVIDLA…EPVTLETPAF (105 aa)) is the Fibronectin type-III domain. In terms of domain architecture, B30.2/SPRY spans 268–477 (FMFRLDASTS…VTTGLQVPSS (210 aa)). A disordered region spans residues 301–336 (KAREKDGKGRTASPINSPARGTPSPKRMPSGRGGRD). Omega-N-methylarginine is present on residues R310 and R320.

As to quaternary structure, oligomerization is required for binding to microtubules.

The protein resides in the cytoplasm. Its subcellular location is the cytoskeleton. It localises to the microtubule organizing center. The protein localises to the centrosome. It is found in the nucleus. The protein resides in the cleavage furrow. May be involved in microtubule organization and stabilization. The polypeptide is Fibronectin type III and SPRY domain-containing protein 1 (FSD1) (Macaca fascicularis (Crab-eating macaque)).